The following is a 653-amino-acid chain: Asparagine--tRNA ligase, cytoplasmic (653 aa).

Belongs to the class-II aminoacyl-tRNA synthetase family.

It is found in the cytoplasm. The enzyme catalyses tRNA(Asn) + L-asparagine + ATP = L-asparaginyl-tRNA(Asn) + AMP + diphosphate + H(+). In Dictyostelium discoideum (Social amoeba), this protein is Asparagine--tRNA ligase, cytoplasmic (asnS1).